The sequence spans 217 residues: DNA transformation protein TfoX (217 aa).

It belongs to the Sxy/TfoX family.

In terms of biological role, required for DNA transformation. Positively regulates genes required for DNA transformation (late competence-specific genes) in association with CRP. Required for expression of the late competence-specific gene, com101A. Required for expression of the dprABC operon. The sequence is that of DNA transformation protein TfoX from Haemophilus influenzae (strain ATCC 51907 / DSM 11121 / KW20 / Rd).